The sequence spans 371 residues: tRNA-specific 2-thiouridylase MnmA (371 aa).

ATP-binding positions include Gly-13 to Ser-20 and Met-39. An interaction with target base in tRNA region spans residues Asn-99–Asp-101. The active-site Nucleophile is the Cys-104. Residues Cys-104 and Cys-200 are joined by a disulfide bond. Gly-128 serves as a coordination point for ATP. Residues Lys-150 to Gln-152 are interaction with tRNA. The active-site Cysteine persulfide intermediate is the Cys-200. The interaction with tRNA stretch occupies residues Arg-308–Tyr-309.

Belongs to the MnmA/TRMU family.

The protein localises to the cytoplasm. The enzyme catalyses S-sulfanyl-L-cysteinyl-[protein] + uridine(34) in tRNA + AH2 + ATP = 2-thiouridine(34) in tRNA + L-cysteinyl-[protein] + A + AMP + diphosphate + H(+). Functionally, catalyzes the 2-thiolation of uridine at the wobble position (U34) of tRNA, leading to the formation of s(2)U34. The sequence is that of tRNA-specific 2-thiouridylase MnmA from Bacillus cytotoxicus (strain DSM 22905 / CIP 110041 / 391-98 / NVH 391-98).